The following is a 455-amino-acid chain: Probable glycine dehydrogenase (decarboxylating) subunit 1 (455 aa).

Belongs to the GcvP family. N-terminal subunit subfamily. The glycine cleavage system is composed of four proteins: P, T, L and H. In this organism, the P 'protein' is a heterodimer of two subunits.

The enzyme catalyses N(6)-[(R)-lipoyl]-L-lysyl-[glycine-cleavage complex H protein] + glycine + H(+) = N(6)-[(R)-S(8)-aminomethyldihydrolipoyl]-L-lysyl-[glycine-cleavage complex H protein] + CO2. Functionally, the glycine cleavage system catalyzes the degradation of glycine. The P protein binds the alpha-amino group of glycine through its pyridoxal phosphate cofactor; CO(2) is released and the remaining methylamine moiety is then transferred to the lipoamide cofactor of the H protein. This is Probable glycine dehydrogenase (decarboxylating) subunit 1 from Saccharolobus solfataricus (strain ATCC 35092 / DSM 1617 / JCM 11322 / P2) (Sulfolobus solfataricus).